The primary structure comprises 344 residues: AI-2 transport protein TqsA (344 aa).

Over 1 to 4 the chain is Cytoplasmic; that stretch reads MAKP. Residues 5-25 form a helical membrane-spanning segment; the sequence is IITLNGLKIVIMLGMLVIILC. The Periplasmic portion of the chain corresponds to 26 to 30; sequence GIRFA. A helical membrane pass occupies residues 31–51; it reads AEIIVPFILALFIAVILNPLV. Over 52-61 the chain is Cytoplasmic; the sequence is QHMVRWRVPR. Residues 62 to 82 form a helical membrane-spanning segment; it reads VLAVSILMTIIVMAMVLLLAY. Over 83 to 149 the chain is Periplasmic; sequence LGSALNELTR…LLTQLSNAMS (67 aa). A helical transmembrane segment spans residues 150–170; sequence SIFLLLLTVLFMLLEVPQLPG. Residues 171-196 are Cytoplasmic-facing; the sequence is KFQQMMARPVEGMAAIQRAIDSVSHY. Residues 197-217 traverse the membrane as a helical segment; the sequence is LVLKTAISIITGLVAWAMLAA. Over 218-221 the chain is Periplasmic; sequence LDVR. Residues 222–242 traverse the membrane as a helical segment; that stretch reads FAFVWGLLAFALNYIPNIGSV. Topologically, residues 243-257 are cytoplasmic; sequence LAAIPPIAQVLVFNG. A helical membrane pass occupies residues 258–278; the sequence is FYEALLVLAGYLLINLVFGNI. Over 279–292 the chain is Periplasmic; it reads LEPRIMGRGLGLST. A helical membrane pass occupies residues 293 to 313; the sequence is LVVFLSLIFWGWLLGPVGMLL. The Cytoplasmic segment spans residues 314–344; that stretch reads SVPLTIIVKIALEQTAGGQSIAVLLSDLNKE.

The protein belongs to the autoinducer-2 exporter (AI-2E) (TC 2.A.86) family.

It localises to the cell inner membrane. It catalyses the reaction (2R,4S)-2-methyltetrahydrofuran-2,3,3,4-tetrol(in) = (2R,4S)-2-methyltetrahydrofuran-2,3,3,4-tetrol(out). Its function is as follows. Involved in the transport of the quorum-sensing signal autoinducer 2 (AI-2). Controls the transport of AI-2 either by enhancing its secretion or inhibiting its uptake and consequently represses biofilm formation and motility and affects the global gene expression in biofilms. The protein is AI-2 transport protein TqsA of Escherichia coli (strain K12).